We begin with the raw amino-acid sequence, 115 residues long: Large ribosomal subunit protein uL24 (115 aa).

The protein belongs to the universal ribosomal protein uL24 family. Part of the 50S ribosomal subunit.

In terms of biological role, one of two assembly initiator proteins, it binds directly to the 5'-end of the 23S rRNA, where it nucleates assembly of the 50S subunit. Functionally, one of the proteins that surrounds the polypeptide exit tunnel on the outside of the subunit. This chain is Large ribosomal subunit protein uL24, found in Deinococcus geothermalis (strain DSM 11300 / CIP 105573 / AG-3a).